The following is a 156-amino-acid chain: Small ribosomal subunit protein uS7c (156 aa).

It belongs to the universal ribosomal protein uS7 family. In terms of assembly, part of the 30S ribosomal subunit.

It localises to the plastid. The protein resides in the chloroplast. In terms of biological role, one of the primary rRNA binding proteins, it binds directly to 16S rRNA where it nucleates assembly of the head domain of the 30S subunit. This is Small ribosomal subunit protein uS7c (rps7) from Tupiella akineta (Green alga).